We begin with the raw amino-acid sequence, 318 residues long: Mitochondrial thiamine pyrophosphate carrier (318 aa).

Solcar repeat units lie at residues 13–106 (ISNV…LTEL), 116–202 (RDFS…LKRA), and 214–309 (NGNF…FCNF). The chain crosses the membrane as a helical span at residues 19 to 39 (AVAGSVSGLVTRVLISPLDVI). Phosphoserine is present on serine 51. A run of 4 helical transmembrane segments spans residues 87-107 (LLSI…TELV), 122-142 (FLCG…VDVL), 173-193 (VFYK…GFQF), and 220-240 (LLCG…LDLF). Positions 241-246 (KKRLQV) match the Substrate recognition motif. A helical transmembrane segment spans residues 293-313 (ALSTGLVFFWYELFCNFFHHM).

It belongs to the mitochondrial carrier (TC 2.A.29) family.

Its subcellular location is the mitochondrion membrane. The enzyme catalyses thiamine phosphate(out) + thiamine diphosphate(in) = thiamine phosphate(in) + thiamine diphosphate(out). Its function is as follows. Mitochondrial transporter mediating uptake of thiamine diphosphate into mitochondria. It is not clear if the antiporter activity is affected by the membrane potential or by the proton electrochemical gradient. The polypeptide is Mitochondrial thiamine pyrophosphate carrier (SLC25A19) (Bos taurus (Bovine)).